The following is a 363-amino-acid chain: Apelin receptor B (363 aa).

Topologically, residues 1-38 are extracellular; sequence MESEGFSATTEQYEYYDYANETGLQPCDETDWDFSYSL. A glycan (N-linked (GlcNAc...) asparagine) is linked at N20. Cystine bridges form between C27–C287 and C109–C186. A helical membrane pass occupies residues 39-59; the sequence is LPVFYMIVFVLGLSGNGVVIF. The Cytoplasmic segment spans residues 60–77; it reads TVWKAKPKRRSADTYIGN. A helical membrane pass occupies residues 78–98; sequence LALADLAFVVTLPLWATYTAL. Residues 99-111 lie on the Extracellular side of the membrane; sequence GFHWPFGSALCKL. The helical transmembrane segment at 112-132 threads the bilayer; that stretch reads SSYLVLLNMFASVFCLTCLSF. The Cytoplasmic segment spans residues 133–152; sequence DRYLAIVHSLSSAKLRSRSS. A helical transmembrane segment spans residues 153–173; sequence ILVSLAVIWLFSGLLALPSLI. The Extracellular portion of the chain corresponds to 174-200; the sequence is LRDTRVEGNNTICDLDFSGVSSKENEN. N-linked (GlcNAc...) asparagine glycosylation occurs at N182. The helical transmembrane segment at 201 to 221 threads the bilayer; it reads FWIGGLSILTTVPGFLLPLLL. Residues 222–249 are Cytoplasmic-facing; it reads MTIFYCFIGGKVTMHFQNLKKEEQKKKR. A helical transmembrane segment spans residues 250 to 270; the sequence is LLKIIITLVVVFAICWLPFHI. The Extracellular portion of the chain corresponds to 271–297; sequence LKTIHFLDLMGFLELSCSAQNIIVSLH. Residues 298–318 form a helical membrane-spanning segment; that stretch reads PYATCLAYVNSCLNPFLYAFF. The Cytoplasmic segment spans residues 319 to 363; it reads DLRFRSQCFFFFGFKKVLQGHLSNTSSSLSAQTQKSEIHSLATKV.

This sequence belongs to the G-protein coupled receptor 1 family. Expressed in all blood vessels including the posterior cardinal vein, intersomitic veins and the vitelline vein network.

The protein resides in the cell membrane. Functionally, g protein-coupled receptor for peptide hormones apelin (apln) and apelin receptor early endogenous ligand (apela), that plays a role in the regulation of normal cardiovascular function and fluid homeostasis. When acting as apelin receptor, activates both G(i) protein pathway that inhibits adenylate cyclase activity, and the beta-arrestin pathway that promotes internalization of the receptor. Also functions as mechanoreceptor that is activated by pathological stimuli in a G-protein-independent fashion to induce beta-arrestin signaling, hence eliciting cardiac hypertrophy. However, the presence of apelin ligand blunts cardiac hypertrophic induction from APLNR/APJ on response to pathological stimuli. Plays a key role in early development such as gastrulation, blood vessels formation and heart morphogenesis by acting as a receptor for apela hormone, promoting endoderm and mesendoderm cell migration and regulating the migration of cells fated to become myocardial progenitors, respectively. Promotes angioblast migration toward the embryonic midline, i.e. the position of the future vessel formation, during vasculogenesis. May promote sinus venosus (SV)-derived endothelial cells migration into the developing heart to promote coronary blood vessel development. Required for cardiovascular development, particularly for intersomitic vein angiogenesis by acting as a receptor for apln hormone. Also plays a role in various processes in adults such as regulation of blood vessel formation, blood pressure, heart contractility, and heart failure. Acts upstream of the i/o type of G-alpha proteins in the differentiation of endothelium, erythroid cells, myeloid cells and cardiomyocytes. The chain is Apelin receptor B (aplnr-b) from Xenopus laevis (African clawed frog).